Reading from the N-terminus, the 1331-residue chain is ABC multidrug transporter MDR2 (1331 aa).

2 stretches are compositionally biased toward basic and acidic residues: residues 1 to 20 (MVEVSEKPNTQDDGVSKQEN) and 31 to 41 (SDKEKVAKKGN). The interval 1 to 51 (MVEVSEKPNTQDDGVSKQENRNPASSSSSTSDKEKVAKKGNSDATKSSTPE) is disordered. Helical transmembrane passes span 93–113 (MIFLAIVSLASIAAGAALPLF), 147–167 (YFVYLGIAQFILLYVSTVGFI), 219–239 (KVGLTLTALSTFFSAFIIGYV), and 242–262 (WKLALICSSTIVAMILVMGGI). The region spanning 97–387 (AIVSLASIAA…VAPNTQAFAS (291 aa)) is the ABC transmembrane type-1 1 domain. N-linked (GlcNAc...) asparagine glycosylation is present at asparagine 293. 2 consecutive transmembrane segments (helical) span residues 325-345 (LGIMFGSMMAIMYSNYGLGFW) and 358-378 (LSAIVNILLAIVIGSFSIGNV). In terms of domain architecture, ABC transporter 1 spans 422–667 (IEFRGIKHIY…KGTYLQLVEA (246 aa)). 457-464 (GPSGSGKS) provides a ligand contact to ATP. N-linked (GlcNAc...) asparagine glycosylation is found at asparagine 529 and asparagine 737. Helical transmembrane passes span 762 to 782 (LCGFFFAVLSGAGQPVQSVFF) and 810 to 830 (FLMLGLVQLVTQSAQGVIFAI). The ABC transmembrane type-1 2 domain maps to 764–1051 (GFFFAVLSGA…VFSFSPDMGK (288 aa)). An N-linked (GlcNAc...) asparagine glycan is attached at asparagine 860. 4 consecutive transmembrane segments (helical) span residues 884–904 (LGTILMVSTTLIVALTVALAF), 910–930 (LVCISTVPVLLLCGFYRFWIL), 995–1015 (ASQSFSFFCLALGFWYGGGLL), and 1025–1045 (FFLCISCVIFGSQSAGIVFSF). Residues 1086–1324 (IEFRDVHFRY…KGRYYELVHM (239 aa)) enclose the ABC transporter 2 domain. An N-linked (GlcNAc...) asparagine glycan is attached at asparagine 1108. 1121–1128 (GPSGCGKS) contributes to the ATP binding site.

It belongs to the ABC transporter superfamily. ABCB family. Multidrug resistance exporter (TC 3.A.1.201) subfamily.

Its subcellular location is the cell membrane. It carries out the reaction itraconazole(in) + ATP + H2O = itraconazole(out) + ADP + phosphate + H(+). Pleiotropic ABC efflux transporter that may be involved in the modulation susceptibility to a wide range of unrelated cytotoxic compounds. This Trichophyton equinum (strain ATCC MYA-4606 / CBS 127.97) (Horse ringworm fungus) protein is ABC multidrug transporter MDR2.